A 473-amino-acid polypeptide reads, in one-letter code: Arginine biosynthesis bifunctional protein ArgJ, mitochondrial (473 aa).

Positions 201, 230, 241, 328, 468, and 473 each coordinate substrate. Thr241 (nucleophile) is an active-site residue.

This sequence belongs to the ArgJ family. In terms of assembly, heterodimer of an alpha and a beta chain. In terms of processing, the alpha and beta chains are autoproteolytically processed from a single precursor protein within the mitochondrion.

The protein resides in the mitochondrion matrix. The catalysed reaction is N(2)-acetyl-L-ornithine + L-glutamate = N-acetyl-L-glutamate + L-ornithine. It catalyses the reaction L-glutamate + acetyl-CoA = N-acetyl-L-glutamate + CoA + H(+). Its pathway is amino-acid biosynthesis; L-arginine biosynthesis; L-ornithine and N-acetyl-L-glutamate from L-glutamate and N(2)-acetyl-L-ornithine (cyclic): step 1/1. The protein operates within amino-acid biosynthesis; L-arginine biosynthesis; N(2)-acetyl-L-ornithine from L-glutamate: step 1/4. In terms of biological role, catalyzes two activities which are involved in the cyclic version of arginine biosynthesis: the synthesis of acetylglutamate from glutamate and acetyl-CoA, and of ornithine by transacetylation between acetylornithine and glutamate. The protein is Arginine biosynthesis bifunctional protein ArgJ, mitochondrial of Ajellomyces capsulatus (strain H143) (Darling's disease fungus).